Reading from the N-terminus, the 563-residue chain is Chaperonin GroEL 1 (563 aa).

ATP-binding positions include 29-32, 86-90, glycine 413, 476-478, and aspartate 492; these read TIGP, DGTTT, and NAA. Residues 520-545 are disordered; that stretch reads DKPEPPSPAGGEGGGDPMGGMGGMGG. Positions 529–545 are enriched in gly residues; it reads GGEGGGDPMGGMGGMGG.

The protein belongs to the chaperonin (HSP60) family. As to quaternary structure, forms a cylinder of 14 subunits composed of two heptameric rings stacked back-to-back. Interacts with the co-chaperonin GroES.

Its subcellular location is the cytoplasm. It catalyses the reaction ATP + H2O + a folded polypeptide = ADP + phosphate + an unfolded polypeptide.. Together with its co-chaperonin GroES, plays an essential role in assisting protein folding. The GroEL-GroES system forms a nano-cage that allows encapsulation of the non-native substrate proteins and provides a physical environment optimized to promote and accelerate protein folding. In Prochlorococcus marinus (strain SARG / CCMP1375 / SS120), this protein is Chaperonin GroEL 1.